Consider the following 89-residue polypeptide: Chromosomal protein MC1a (89 aa).

Its function is as follows. Protects DNA against thermal denaturation and modulates transcription. This Methanothrix soehngenii (Methanosaeta concilii) protein is Chromosomal protein MC1a.